A 198-amino-acid chain; its full sequence is MAYPGHPGAGGGYYPGGYGGAPGGPAFPGQTQDPLYGYFAAVAGQDGQIDADELQRCLTQSGIAGGYKPFNLETCRLMVSMLDRDMSGTMGFNEFKELWAVLNGWRQHFISFDSDRSGTVDPQELQKALTTMGFRLSPQTVNSVAKRYSTSGKITFDDYIACCVKLRALTDSFRRRDSGQQGVVNFSYDDFIQCVMTV.

4 consecutive EF-hand domains span residues 45 to 64 (QDGQ…SGIA), 70 to 98 (FNLE…FKEL), 100 to 135 (AVLN…MGFR), and 151 to 169 (SGKI…LRAL). Asp83, Asp85, Ser87, Thr89, Glu94, Asp113, Asp115, Ser117, Thr119, and Glu124 together coordinate Ca(2+). Residue Ser178 is modified to Phosphoserine.

Homodimer. Interacts with GCA, RYR2 and ANXA7. Detected in cardiac myocytes.

It localises to the cytoplasm. Its subcellular location is the sarcoplasmic reticulum membrane. Its function is as follows. Calcium-binding protein that modulates excitation-contraction coupling in the heart. Contributes to calcium homeostasis in the heart sarcoplasmic reticulum. Modulates the activity of RYR2 calcium channels. In Mus musculus (Mouse), this protein is Sorcin (Sri).